Reading from the N-terminus, the 163-residue chain is Regulatory protein RecX (163 aa).

Positions 1-21 (MSDAEDIPTGRKRRPREQTPV) are disordered.

Belongs to the RecX family.

It localises to the cytoplasm. Its function is as follows. Modulates RecA activity. This Stenotrophomonas maltophilia (strain R551-3) protein is Regulatory protein RecX.